Consider the following 71-residue polypeptide: Small ribosomal subunit protein bS21 (71 aa).

Belongs to the bacterial ribosomal protein bS21 family.

This is Small ribosomal subunit protein bS21 from Shewanella piezotolerans (strain WP3 / JCM 13877).